The primary structure comprises 136 residues: FK506-binding protein 2 (136 aa).

The signal sequence occupies residues 1-17 (MLSQIWILFTFMVCVIA). One can recognise a PPIase FKBP-type domain in the interval 45-134 (GDMVSVHYTG…DFDVELVDIA (90 aa)).

It belongs to the FKBP-type PPIase family. FKBP2 subfamily.

Its subcellular location is the endoplasmic reticulum. The enzyme catalyses [protein]-peptidylproline (omega=180) = [protein]-peptidylproline (omega=0). Inhibited by both FK506 and rapamycin. Functionally, PPIases accelerate the folding of proteins. It catalyzes the cis-trans isomerization of proline imidic peptide bonds in oligopeptides. This chain is FK506-binding protein 2 (FPR2), found in Candida glabrata (strain ATCC 2001 / BCRC 20586 / JCM 3761 / NBRC 0622 / NRRL Y-65 / CBS 138) (Yeast).